A 500-amino-acid chain; its full sequence is ADP,ATP carrier protein 5 (500 aa).

11 consecutive transmembrane segments (helical) span residues 26–46 (LGKF…QNIL), 62–82 (IAGF…VIIY), 94–114 (IFYY…FVIY), 149–169 (YIVY…LLFW), 184–204 (FYTL…FLMM), 224–244 (ITLV…CCLL), 287–307 (LWLL…VEAV), 328–348 (LYIL…NNVM), 357–377 (AVIS…LIVF), 381–401 (ILSL…VSIG), and 469–489 (SISP…IYAV).

Belongs to the ADP/ATP translocase tlc family.

It localises to the cell membrane. In terms of biological role, provides the rickettsial cell with host ATP in exchange for rickettsial ADP. This is an obligate exchange system. This energy acquiring activity is an important component of rickettsial parasitism. In Rickettsia prowazekii (strain Madrid E), this protein is ADP,ATP carrier protein 5 (tlcE).